The sequence spans 87 residues: UPF0729 protein C18orf32 homolog (87 aa).

Belongs to the UPF0729 family.

This is UPF0729 protein C18orf32 homolog from Esox lucius (Northern pike).